The chain runs to 384 residues: Spermidine/putrescine import ATP-binding protein PotA (384 aa).

One can recognise an ABC transporter domain in the interval 6-238 (IAFQNVSKVF…PINHFVATFI (233 aa)). 40 to 47 (GASGSGKS) contributes to the ATP binding site.

This sequence belongs to the ABC transporter superfamily. Spermidine/putrescine importer (TC 3.A.1.11.1) family. The complex is composed of two ATP-binding proteins (PotA), two transmembrane proteins (PotB and PotC) and a solute-binding protein (PotD).

It localises to the cell membrane. The enzyme catalyses ATP + H2O + polyamine-[polyamine-binding protein]Side 1 = ADP + phosphate + polyamineSide 2 + [polyamine-binding protein]Side 1.. In terms of biological role, part of the ABC transporter complex PotABCD involved in spermidine/putrescine import. Responsible for energy coupling to the transport system. This chain is Spermidine/putrescine import ATP-binding protein PotA, found in Streptococcus thermophilus (strain ATCC BAA-491 / LMD-9).